Reading from the N-terminus, the 263-residue chain is Taurine import ATP-binding protein TauB (263 aa).

Positions leucine 4–serine 235 constitute an ABC transporter domain. Glycine 40–serine 47 lines the ATP pocket.

This sequence belongs to the ABC transporter superfamily. Taurine importer (TC 3.A.1.17.1) family. As to quaternary structure, the complex is composed of two ATP-binding proteins (TauB), two transmembrane proteins (TauC) and a solute-binding protein (TauA).

It localises to the cell inner membrane. The catalysed reaction is taurine(out) + ATP + H2O = taurine(in) + ADP + phosphate + H(+). Its function is as follows. Part of the ABC transporter complex TauABC involved in taurine import. Responsible for energy coupling to the transport system. This chain is Taurine import ATP-binding protein TauB, found in Pseudomonas aeruginosa (strain ATCC 15692 / DSM 22644 / CIP 104116 / JCM 14847 / LMG 12228 / 1C / PRS 101 / PAO1).